A 143-amino-acid polypeptide reads, in one-letter code: Nucleoside diphosphate kinase (143 aa).

The NDPK-like domain occupies 1-132; sequence MVKPDGVQRG…LWFSPQELCQ (132 aa). Lysine 3, phenylalanine 51, arginine 79, threonine 85, arginine 96, valine 103, and asparagine 106 together coordinate ADP. Positions 3, 51, 79, 85, and 96 each coordinate ATP. Asparagine 106 provides a ligand contact to ATP. The active-site Pros-phosphohistidine intermediate is histidine 109.

It belongs to the NDK family. Homohexamer. Mg(2+) serves as cofactor.

The catalysed reaction is a 2'-deoxyribonucleoside 5'-diphosphate + ATP = a 2'-deoxyribonucleoside 5'-triphosphate + ADP. It carries out the reaction a ribonucleoside 5'-diphosphate + ATP = a ribonucleoside 5'-triphosphate + ADP. It catalyses the reaction GDP + ATP = GTP + ADP. It functions in the pathway purine metabolism; purine nucleotide biosynthesis. Its function is as follows. Major role in the synthesis of nucleoside triphosphates other than ATP. The ATP gamma phosphate is transferred to the NDP beta phosphate via a ping-pong mechanism, using a phosphorylated active-site intermediate. The sequence is that of Nucleoside diphosphate kinase from Schistosoma mansoni (Blood fluke).